Here is a 680-residue protein sequence, read N- to C-terminus: Pescadillo homolog (680 aa).

The interval 315–336 (GEDEKPKAITNGEGESETPTDA) is disordered. A BRCT domain is found at 359–471 (DPSQLFANCT…ELKEPNQYAP (113 aa)). Residues 494 to 680 (VPLEEQQTEA…ERKMAKGKAT (187 aa)) are disordered. Composition is skewed to acidic residues over residues 511–530 (DVED…DDEA), 543–556 (GSDD…EEAD), and 565–576 (AEVDDASEDDEQ). Basic and acidic residues-rich tracts occupy residues 597–610 (KASE…DPKS), 617–635 (RKEL…ERAK), and 654–664 (NKKDAESEKLR). Positions 609 to 680 (KSKAKQQKRK…ERKMAKGKAT (72 aa)) form a coiled coil. Basic residues predominate over residues 665–680 (EKRRRIERKMAKGKAT).

This sequence belongs to the pescadillo family. In terms of assembly, component of the NOP7 complex, composed of ERB1, NOP7 and YTM1. The complex is held together by ERB1, which interacts with NOP7 via its N-terminal domain and with YTM1 via a high-affinity interaction between the seven-bladed beta-propeller domains of the 2 proteins. The NOP7 complex associates with the 66S pre-ribosome.

The protein localises to the nucleus. It is found in the nucleolus. The protein resides in the nucleoplasm. Component of the NOP7 complex, which is required for maturation of the 25S and 5.8S ribosomal RNAs and formation of the 60S ribosome. This Pyricularia oryzae (strain 70-15 / ATCC MYA-4617 / FGSC 8958) (Rice blast fungus) protein is Pescadillo homolog.